Consider the following 221-residue polypeptide: Germin-like protein subfamily 1 member 17 (221 aa).

The signal sequence occupies residues 1–21 (MKVSMSLILITLSALVTIAKA). Cys31 and Cys48 form a disulfide bridge. One can recognise a Cupin type-1 domain in the interval 76 to 213 (SNVTTVNVDQ…AFQLDVNVVK (138 aa)). N-linked (GlcNAc...) asparagine glycosylation is present at Asn77. 4 residues coordinate Mn(2+): His110, His112, Glu117, and His159.

It belongs to the germin family. Oligomer (believed to be a pentamer but probably hexamer).

The protein localises to the secreted. It is found in the extracellular space. Its subcellular location is the apoplast. May play a role in plant defense. Probably has no oxalate oxidase activity even if the active site is conserved. In Arabidopsis thaliana (Mouse-ear cress), this protein is Germin-like protein subfamily 1 member 17.